Reading from the N-terminus, the 583-residue chain is Protein disulfide-isomerase-like protein of the testis (583 aa).

Positions 1–17 (MDLLWMPLLLVAARISA) are cleaved as a signal peptide. Residues Asn-58, Asn-128, Asn-160, and Asn-340 are each glycosylated (N-linked (GlcNAc...) asparagine). The Thioredoxin domain maps to 388–451 (LVKQLVGKNF…IAKIDITAND (64 aa)). Basic and acidic residues-rich tracts occupy residues 522 to 531 (EVPMMKKELP) and 540 to 559 (NVTK…KTSE). A disordered region spans residues 522–583 (EVPMMKKELP…KKKPKVKEEL (62 aa)). A glycan (N-linked (GlcNAc...) asparagine) is linked at Asn-540. A compositionally biased stretch (basic residues) spans 573–583 (QKKKPKVKEEL). A Prevents secretion from ER motif is present at residues 580 to 583 (KEEL).

The protein belongs to the protein disulfide isomerase family. In terms of assembly, homodimer. The homodimer is not disulfide-linked. Interacts with ERO1A and CLGN. Post-translationally, N-glycosylated.

The protein localises to the endoplasmic reticulum. Functionally, probable redox-inactive chaperone involved in spermatogenesis. This chain is Protein disulfide-isomerase-like protein of the testis (PDILT), found in Macaca fascicularis (Crab-eating macaque).